The chain runs to 192 residues: Na(+)-translocating ferredoxin:NAD(+) oxidoreductase complex subunit A (192 aa).

6 consecutive transmembrane segments (helical) span residues 4–24 (IFIMISAIFVNNFVLSRFLGI), 38–58 (VGMGVAVTFVMALASAITYVV), 71–91 (LQTIAFILIIAALVQLVEMII), 101–121 (ALGVYLPLITTNCAVLGVALI), 133–153 (IFNGVGAALGFTLAIVLFAGI), and 169–189 (FPIALLTAGLMAIAFLGFSGM).

The protein belongs to the NqrDE/RnfAE family. In terms of assembly, the complex is composed of six subunits: RnfA, RnfB, RnfC, RnfD, RnfE and RnfG.

It is found in the cell membrane. The catalysed reaction is 2 reduced [2Fe-2S]-[ferredoxin] + Na(+)(in) + NAD(+) + H(+) = 2 oxidized [2Fe-2S]-[ferredoxin] + Na(+)(out) + NADH. Functionally, part of a membrane-bound complex that couples electron transfer with translocation of ions across the membrane. Couples electron transfer from reduced ferredoxin to NAD(+) with electrogenic movement of Na(+) out of the cell. Involved in caffeate respiration. The protein is Na(+)-translocating ferredoxin:NAD(+) oxidoreductase complex subunit A of Acetobacterium woodii (strain ATCC 29683 / DSM 1030 / JCM 2381 / KCTC 1655 / WB1).